The chain runs to 539 residues: GMP synthase [glutamine-hydrolyzing] (539 aa).

The 199-residue stretch at 4–202 folds into the Glutamine amidotransferase type-1 domain; that stretch reads KVLILDFGSQ…VLEIAGAKPD (199 aa). The Nucleophile role is filled by C81. Catalysis depends on residues H176 and E178. One can recognise a GMPS ATP-PPase domain in the interval 203–395; it reads WVMRDHIDEA…LGLPHEMVYR (193 aa). Residue 230–236 coordinates ATP; it reads SGGVDSS.

Homodimer.

The enzyme catalyses XMP + L-glutamine + ATP + H2O = GMP + L-glutamate + AMP + diphosphate + 2 H(+). The protein operates within purine metabolism; GMP biosynthesis; GMP from XMP (L-Gln route): step 1/1. Catalyzes the synthesis of GMP from XMP. This is GMP synthase [glutamine-hydrolyzing] from Ralstonia pickettii (strain 12J).